Consider the following 356-residue polypeptide: Peptide chain release factor 1 (356 aa).

Q233 carries the N5-methylglutamine modification.

Belongs to the prokaryotic/mitochondrial release factor family. Post-translationally, methylated by PrmC. Methylation increases the termination efficiency of RF1.

The protein localises to the cytoplasm. Its function is as follows. Peptide chain release factor 1 directs the termination of translation in response to the peptide chain termination codons UAG and UAA. This is Peptide chain release factor 1 (prfA) from Bacillus subtilis (strain 168).